The following is a 143-amino-acid chain: 18 kDa heat shock protein (143 aa).

One can recognise a sHSP domain in the interval 23–135 (TWSRPTAMPM…KRRRVKVGQG (113 aa)).

The protein belongs to the small heat shock protein (HSP20) family.

This is 18 kDa heat shock protein (hsp18) from Streptomyces albus G.